A 239-amino-acid polypeptide reads, in one-letter code: DnaA regulatory inactivator Hda (239 aa).

The protein belongs to the DnaA family. HdA subfamily. In terms of assembly, the active form seems to be an ADP-bound monomer. Forms the RIDA complex (regulatory inactivation of DnaA) of ATP-DnaA, ADP-Hda and the DNA-loaded beta sliding clamp (dnaN).

Functionally, mediates the interaction of DNA replication initiator protein DnaA with DNA polymerase subunit beta sliding clamp (dnaN). Stimulates hydrolysis of ATP-DnaA to ADP-DnaA, rendering DnaA inactive for reinitiation, a process called regulatory inhibition of DnaA or RIDA. This is DnaA regulatory inactivator Hda from Yersinia enterocolitica serotype O:8 / biotype 1B (strain NCTC 13174 / 8081).